Consider the following 254-residue polypeptide: Kallikrein-4 (254 aa).

A signal peptide spans 1-26 (MATAGNPWGWFLGYLILGVAGSLVSG). Positions 27–30 (SCSQ) are excised as a propeptide. The region spanning 31–252 (IINGEDCSPH…FTEWIEKTVQ (222 aa)) is the Peptidase S1 domain. Disulfide bonds link Cys-37/Cys-167, Cys-56/Cys-72, Cys-141/Cys-241, Cys-148/Cys-213, Cys-178/Cys-192, and Cys-203/Cys-228. His-40 is a binding site for Zn(2+). Residue His-71 is the Charge relay system of the active site. Glu-91 lines the Zn(2+) pocket. The active-site Charge relay system is Asp-116. Asn-169 carries an N-linked (GlcNAc...) asparagine glycan. The Charge relay system role is filled by Ser-207.

It belongs to the peptidase S1 family. Kallikrein subfamily. In terms of processing, N-glycosylated. The N-glycan structures are of complex diantennary or triantennary type, which may be further modified with up to 2 sialic acid residues. Expressed in prostate.

Its subcellular location is the secreted. Functionally, has a major role in enamel formation. Required during the maturation stage of tooth development for clearance of enamel proteins and normal structural patterning of the crystalline matrix. This Homo sapiens (Human) protein is Kallikrein-4 (KLK4).